The chain runs to 166 residues: Small ribosomal subunit protein uS5 (166 aa).

The region spanning 12–75 (YIEKLVQVNR…EAARRNMIQV (64 aa)) is the S5 DRBM domain.

The protein belongs to the universal ribosomal protein uS5 family. As to quaternary structure, part of the 30S ribosomal subunit. Contacts proteins S4 and S8.

In terms of biological role, with S4 and S12 plays an important role in translational accuracy. Its function is as follows. Located at the back of the 30S subunit body where it stabilizes the conformation of the head with respect to the body. The sequence is that of Small ribosomal subunit protein uS5 from Azotobacter vinelandii (strain DJ / ATCC BAA-1303).